We begin with the raw amino-acid sequence, 181 residues long: Isopentenyl-diphosphate Delta-isomerase (181 aa).

Mn(2+) is bound by residues H25 and H32. Positions 30 to 164 (PLHLAFSCWL…PWAFSPWMVM (135 aa)) constitute a Nudix hydrolase domain. C67 is an active-site residue. Residue H69 coordinates Mn(2+). Mg(2+) is bound at residue E87. Mn(2+)-binding residues include E114 and E116. E116 is a catalytic residue.

The protein belongs to the IPP isomerase type 1 family. In terms of assembly, homodimer. Mg(2+) serves as cofactor. The cofactor is Mn(2+).

It is found in the cytoplasm. The catalysed reaction is isopentenyl diphosphate = dimethylallyl diphosphate. The protein operates within isoprenoid biosynthesis; dimethylallyl diphosphate biosynthesis; dimethylallyl diphosphate from isopentenyl diphosphate: step 1/1. In terms of biological role, catalyzes the 1,3-allylic rearrangement of the homoallylic substrate isopentenyl (IPP) to its highly electrophilic allylic isomer, dimethylallyl diphosphate (DMAPP). This chain is Isopentenyl-diphosphate Delta-isomerase, found in Salmonella agona (strain SL483).